The sequence spans 261 residues: Ribosome biogenesis protein nsa2 (261 aa).

Basic and acidic residues-rich tracts occupy residues 1-36 (MPQNEYIERAQKLHGKRLDTEERARKKAAREGHKQS) and 66-82 (KQHEERNVKGAPEEKDP). Disordered stretches follow at residues 1-44 (MPQN…NLRG) and 64-97 (AIKQHEERNVKGAPEEKDPSNPVPAYLLDRSNPT). The Nuclear localization signal signature appears at 15 to 22 (GKRLDTEE).

The protein belongs to the eukaryotic ribosomal protein eS8 family. Ribosome biogenesis protein NSA2 subfamily. Component of the pre-66S ribosomal particle. Interacts with nop7 and rrp1. Interacts with rsa4 (via WD repeats).

The protein localises to the nucleus. It localises to the nucleolus. Functionally, involved in the biogenesis of the 60S ribosomal subunit. May play a part in the quality control of pre-60S particles. The protein is Ribosome biogenesis protein nsa2 (rbg-52) of Neurospora crassa (strain ATCC 24698 / 74-OR23-1A / CBS 708.71 / DSM 1257 / FGSC 987).